The primary structure comprises 279 residues: Protease HtpX homolog (279 aa).

2 helical membrane passes run isoleucine 4 to valine 24 and glycine 34 to methionine 54. Position 140 (histidine 140) interacts with Zn(2+). Glutamate 141 is a catalytic residue. Histidine 144 contacts Zn(2+). 2 consecutive transmembrane segments (helical) span residues leucine 155 to isoleucine 175 and phenylalanine 189 to tryptophan 209. Glutamate 215 contributes to the Zn(2+) binding site.

It belongs to the peptidase M48B family. Zn(2+) is required as a cofactor.

It localises to the cell inner membrane. The sequence is that of Protease HtpX homolog from Neisseria gonorrhoeae (strain ATCC 700825 / FA 1090).